Consider the following 315-residue polypeptide: Eukaryotic translation initiation factor 2 subunit 1 (315 aa).

Residues 17–88 (DDVVMVNVRS…DKGYIDLSKR (72 aa)) form the S1 motif domain. Phosphoserine occurs at positions 49 and 52. The segment at 292–315 (RLEKENAEVDGDDDAEEMEAKTED) is disordered. Positions 299-308 (EVDGDDDAEE) are enriched in acidic residues.

Belongs to the eIF-2-alpha family. In terms of assembly, eukaryotic translation initiation factor 2 eIF2 is a heterotrimeric complex composed of an alpha, a beta and a gamma subunit. In terms of processing, phosphorylation at Ser-49 and Ser-52 stabilizes the eIF-2/GDP/eIF2B complex and prevents GDP/GTP exchange reaction, thus impairing the recycling of eIF-2 between successive rounds of initiation and leading to global inhibition of translation, while concomitantly initiating the preferential translation of integrated stress response (ISR)-specific mRNAs.

It localises to the cytoplasm. The protein resides in the stress granule. The protein localises to the cytosol. With respect to regulation, activity is regulated by phosphorylation at Ser-49 and Ser-52, which stabilizes the eIF-2/GDP/eIF2B complex and prevents the eIF2B-mediated exchange of GDP for GTP, thereby preventing the formation of the 43S pre-initiation complex (PIC). This results in the global attenuation of 5' cap-dependent protein synthesis and concomitant translation of ISR-specific mRNAs that contain a short upstream open reading frame (uORF) in their 5' UTR. Its function is as follows. Functions in the early steps of protein synthesis by forming a ternary complex with GTP and initiator tRNA. This complex binds to a 40S ribosomal subunit, followed by mRNA binding to form a 43S pre-initiation complex. Junction of the 60S ribosomal subunit to form the 80S initiation complex is preceded by hydrolysis of the GTP bound to eIF-2 and release of an eIF-2-GDP binary complex. In order for eIF-2 to recycle and catalyze another round of initiation, the GDP bound to eIF-2 must exchange with GTP by way of a reaction catalyzed by eIF2B. EIF2S1/eIF2-alpha is a key component of the integrated stress response (ISR), required for adaptation to various stress: phosphorylation by metabolic-stress sensing protein kinases in response to stress converts EIF2S1/eIF-2-alpha in a global protein synthesis inhibitor, leading to a attenuation of cap-dependent translation, while concomitantly initiating the preferential translation of ISR-specific mRNAs, such as the transcriptional activators ATF4 and QRICH1. In Xenopus tropicalis (Western clawed frog), this protein is Eukaryotic translation initiation factor 2 subunit 1 (eif2s1).